The following is a 507-amino-acid chain: Maturase K (507 aa).

The protein belongs to the intron maturase 2 family. MatK subfamily.

Its subcellular location is the plastid. The protein resides in the chloroplast. Functionally, usually encoded in the trnK tRNA gene intron. Probably assists in splicing its own and other chloroplast group II introns. The protein is Maturase K of Browningia hertlingiana (Cactus).